A 352-amino-acid polypeptide reads, in one-letter code: MSDSQPLLLRAARGESVERTPVWMMRQAGRYMKVYRDLRDRYPSFRERSENPDLSYQISMQPFEAFQPDGVILFSDILTPLPGMGIDFDIVESKGPLIQKPIRSLSQIEALQPLEPNATMPFVGEVLGRLRESVGNKAAVLGFVGAPWTLAAYVVEGKSSKNYAVIKAMAFQQPDLLHRLLNHFAESIATYLRYQIDSGAQVVQMFDSWAGQLSPADYDTFAAPYQKRVVDLVKSTHPDTPMILYISGSAGVLERMGRTGVDIISLDWTVDMADGCARLPEHLGVQGNVDPGLLFGTPEAIRERIVDAVRKARGRRHILNLGHGILPGTPEDNAKVFFETGKTVDNLIGSAA.

Residues 26-30 (RQAGR), phenylalanine 45, aspartate 76, tyrosine 153, serine 208, and histidine 323 each bind substrate.

This sequence belongs to the uroporphyrinogen decarboxylase family. In terms of assembly, homodimer.

It localises to the cytoplasm. It catalyses the reaction uroporphyrinogen III + 4 H(+) = coproporphyrinogen III + 4 CO2. Its pathway is porphyrin-containing compound metabolism; protoporphyrin-IX biosynthesis; coproporphyrinogen-III from 5-aminolevulinate: step 4/4. In terms of biological role, catalyzes the decarboxylation of four acetate groups of uroporphyrinogen-III to yield coproporphyrinogen-III. The protein is Uroporphyrinogen decarboxylase of Prochlorococcus marinus (strain MIT 9313).